The chain runs to 1051 residues: Putative transcription factor SEF1 (1051 aa).

Residues 1–10 (MSTDVSERGA) show a composition bias toward basic and acidic residues. 2 disordered regions span residues 1 to 54 (MSTD…SEES) and 67 to 90 (GQAS…RPVT). Residues 11–21 (EAGSSSGLLSS) are compositionally biased toward low complexity. Positions 92–122 (CTHCRQHKIKCNASENFPSSCSRCERMGLQC) form a DNA-binding region, zn(2)-C6 fungal-type. Residues 206 to 218 (SSVKSSVNTPSGS) show a composition bias toward low complexity. Disordered stretches follow at residues 206–227 (SSVK…VDVS), 738–759 (EKNR…TEKR), and 927–968 (ASGN…QPAP).

It is found in the nucleus. Functionally, putative transcription factor. In Eremothecium gossypii (strain ATCC 10895 / CBS 109.51 / FGSC 9923 / NRRL Y-1056) (Yeast), this protein is Putative transcription factor SEF1 (SEF1).